The following is a 298-amino-acid chain: Cyclin-dependent kinase 1 (298 aa).

An N-acetylserine modification is found at S2. The region spanning 8–295 is the Protein kinase domain; that stretch reads YKRLEKVGEG…ARRAAIHPYF (288 aa). ATP contacts are provided by residues 14–22 and K40; that span reads VGEGTYGVV. Residue Y19 is modified to Phosphotyrosine. Catalysis depends on D136, which acts as the Proton acceptor. T169 is subject to Phosphothreonine.

Belongs to the protein kinase superfamily. CMGC Ser/Thr protein kinase family. CDC2/CDKX subfamily. In terms of assembly, forms a stable but non-covalent complex with the CKS1 protein and with a cyclin.

It catalyses the reaction L-seryl-[protein] + ATP = O-phospho-L-seryl-[protein] + ADP + H(+). It carries out the reaction L-threonyl-[protein] + ATP = O-phospho-L-threonyl-[protein] + ADP + H(+). Its activity is regulated as follows. Phosphorylation at Thr-18 or Tyr-19 inactivates the enzyme, while phosphorylation at Thr-169 activates it. Functionally, cyclin-dependent kinase that acts as a master regulator of the mitotic and meiotic cell cycles. Required to drive the G1-S transition. More than 200 substrates have been identified. Substrate specificity is in part regulated by the bound cyclin protein. Phosphorylates YTA7 during S-phase to promote transcription of histones. May phosphorylate CNN1, to contribute to the enrichment of CNN1 on anaphase kinetochores. This chain is Cyclin-dependent kinase 1, found in Saccharomyces cerevisiae (strain ATCC 204508 / S288c) (Baker's yeast).